Reading from the N-terminus, the 383-residue chain is GTP-binding protein 10 (383 aa).

One can recognise an Obg domain in the interval 13-148; it reads GNFIDNLRIY…RIIHLDLKLI (136 aa). One can recognise an OBG-type G domain in the interval 149 to 344; it reads SDVGLVGFPN…LIGCIRKTMD (196 aa). Residues 155 to 162, 202 to 206, and 278 to 281 contribute to the GTP site; these read GFPNAGKS, DLPGL, and NKMD. The tract at residues 362-383 is disordered; that stretch reads LQKETSRTVKRNLKNSPQRTHH. Over residues 369–383 the composition is skewed to basic residues; the sequence is TVKRNLKNSPQRTHH.

It belongs to the TRAFAC class OBG-HflX-like GTPase superfamily. OBG GTPase family.

The protein localises to the nucleus. It is found in the nucleolus. Functionally, may be involved in the ribosome maturation process. The chain is GTP-binding protein 10 (gtpbp10) from Xenopus tropicalis (Western clawed frog).